The sequence spans 428 residues: 3-phosphoshikimate 1-carboxyvinyltransferase (428 aa).

3-phosphoshikimate-binding residues include K22, S23, and R27. K22 contributes to the phosphoenolpyruvate binding site. 2 residues coordinate phosphoenolpyruvate: G96 and R124. S169, S170, Q171, S197, D313, N336, and K340 together coordinate 3-phosphoshikimate. Phosphoenolpyruvate is bound at residue Q171. Catalysis depends on D313, which acts as the Proton acceptor. R344, R386, and K411 together coordinate phosphoenolpyruvate.

It belongs to the EPSP synthase family. As to quaternary structure, monomer.

The protein resides in the cytoplasm. The enzyme catalyses 3-phosphoshikimate + phosphoenolpyruvate = 5-O-(1-carboxyvinyl)-3-phosphoshikimate + phosphate. The protein operates within metabolic intermediate biosynthesis; chorismate biosynthesis; chorismate from D-erythrose 4-phosphate and phosphoenolpyruvate: step 6/7. In terms of biological role, catalyzes the transfer of the enolpyruvyl moiety of phosphoenolpyruvate (PEP) to the 5-hydroxyl of shikimate-3-phosphate (S3P) to produce enolpyruvyl shikimate-3-phosphate and inorganic phosphate. The protein is 3-phosphoshikimate 1-carboxyvinyltransferase of Proteus mirabilis (strain HI4320).